The sequence spans 452 residues: Bifunctional protein GlmU (452 aa).

Positions 1 to 230 are pyrophosphorylase; that stretch reads MSRSRSAIIL…ADEVLGVNSR (230 aa). UDP-N-acetyl-alpha-D-glucosamine is bound by residues 10 to 13, Lys24, Gln75, and 80 to 81; these read LAAG and GT. Residue Asp105 coordinates Mg(2+). 4 residues coordinate UDP-N-acetyl-alpha-D-glucosamine: Gly141, Glu156, Asn171, and Asn228. Asn228 lines the Mg(2+) pocket. The segment at 231–251 is linker; that stretch reads ADLAEAEAAFQSRMRQSMMAD. The interval 252–452 is N-acetyltransferase; the sequence is GVTLIAPETV…ARKARKDSQT (201 aa). UDP-N-acetyl-alpha-D-glucosamine-binding residues include Arg317 and Lys335. The active-site Proton acceptor is the His347. UDP-N-acetyl-alpha-D-glucosamine contacts are provided by Tyr350 and Asn361. Residues Ala364, 370-371, Ser389, Thr407, and Arg424 contribute to the acetyl-CoA site; that span reads NY.

The protein in the N-terminal section; belongs to the N-acetylglucosamine-1-phosphate uridyltransferase family. In the C-terminal section; belongs to the transferase hexapeptide repeat family. Homotrimer. Mg(2+) serves as cofactor.

The protein localises to the cytoplasm. It catalyses the reaction alpha-D-glucosamine 1-phosphate + acetyl-CoA = N-acetyl-alpha-D-glucosamine 1-phosphate + CoA + H(+). The enzyme catalyses N-acetyl-alpha-D-glucosamine 1-phosphate + UTP + H(+) = UDP-N-acetyl-alpha-D-glucosamine + diphosphate. It functions in the pathway nucleotide-sugar biosynthesis; UDP-N-acetyl-alpha-D-glucosamine biosynthesis; N-acetyl-alpha-D-glucosamine 1-phosphate from alpha-D-glucosamine 6-phosphate (route II): step 2/2. Its pathway is nucleotide-sugar biosynthesis; UDP-N-acetyl-alpha-D-glucosamine biosynthesis; UDP-N-acetyl-alpha-D-glucosamine from N-acetyl-alpha-D-glucosamine 1-phosphate: step 1/1. It participates in bacterial outer membrane biogenesis; LPS lipid A biosynthesis. Catalyzes the last two sequential reactions in the de novo biosynthetic pathway for UDP-N-acetylglucosamine (UDP-GlcNAc). The C-terminal domain catalyzes the transfer of acetyl group from acetyl coenzyme A to glucosamine-1-phosphate (GlcN-1-P) to produce N-acetylglucosamine-1-phosphate (GlcNAc-1-P), which is converted into UDP-GlcNAc by the transfer of uridine 5-monophosphate (from uridine 5-triphosphate), a reaction catalyzed by the N-terminal domain. This chain is Bifunctional protein GlmU, found in Maricaulis maris (strain MCS10) (Caulobacter maris).